Consider the following 561-residue polypeptide: Asparagine synthetase [glutamine-hydrolyzing] (561 aa).

Catalysis depends on cysteine 2, which acts as the For GATase activity. One can recognise a Glutamine amidotransferase type-2 domain in the interval 2–191; the sequence is CGIWALFGSD…PGHYEVLDLK (190 aa). L-glutamine is bound by residues 49 to 53, 75 to 77, and aspartate 97; these read RLAVV and NGE. The 324-residue stretch at 213-536 folds into the Asparagine synthetase domain; it reads HAACDTVGNL…PGRSSWLPHY (324 aa). Residues leucine 256, isoleucine 288, and 363–364 contribute to the ATP site; that span reads SG.

It catalyses the reaction L-aspartate + L-glutamine + ATP + H2O = L-asparagine + L-glutamate + AMP + diphosphate + H(+). Its pathway is amino-acid biosynthesis; L-asparagine biosynthesis; L-asparagine from L-aspartate (L-Gln route): step 1/1. This chain is Asparagine synthetase [glutamine-hydrolyzing] (ASNS), found in Gallus gallus (Chicken).